A 66-amino-acid chain; its full sequence is MAYKLKSHRGAAKRFKKTASGGFKRKQAHLRHILTKKTSKRKLHLRPKMMVHKNDHGLVSRMLPFA.

The disordered stretch occupies residues 1 to 22; it reads MAYKLKSHRGAAKRFKKTASGG.

Belongs to the bacterial ribosomal protein bL35 family.

The protein is Large ribosomal subunit protein bL35 of Pseudoalteromonas translucida (strain TAC 125).